The sequence spans 160 residues: Surface-adhesin protein E (160 aa).

A signal peptide spans 1–15 (MKKIILTLSLGLLTA). Cys16 carries the N-palmitoyl cysteine lipid modification. A lipid anchor (S-diacylglycerol cysteine) is attached at Cys16. Residues 41 to 68 (IRLVKNVNYYIDSESIWVDNQEPQIVHF) form an interaction with laminin and plasminogen region. The interval 84–108 (PKRYARSVRQYKILNCANYHLTQVR) is interaction with vitronectin and epithelial cells.

Homodimer. Interacts with host vitronectin, laminin and plasminogen. Can interact with both immobilized and soluble vitronectin.

It localises to the cell outer membrane. The protein localises to the cell surface. Functionally, acts as a multifunctional adhesin involved in direct interactions with host epithelial cells and host proteins, including vitronectin, laminin and plasminogen. In addition, interaction with serum vitronectin plays an important role in bacterial serum resistance, and conversion of plasminogen to plasmin at the cell surface aids in immune evasion and contributes to bacterial virulence. Induces a pro-inflammatory epithelial cell response, leading to interleukin-8 (IL-8) secretion and up-regulation of ICAM1. The polypeptide is Surface-adhesin protein E (pe) (Haemophilus influenzae (strain NTHi 3655)).